The primary structure comprises 590 residues: Monoterepene synthase TPS1, chloropastic (590 aa).

The transit peptide at 1–42 directs the protein to the chloroplast; sequence MALNTFLHFPPCSLSSFSCAVPKLPLAIFHKTMARQIRCPRA. Residues Arg304, Asp341, Asp345, Arg483, and Asp486 each contribute to the (2E)-geranyl diphosphate site. Mg(2+) is bound by residues Asp341 and Asp345. The short motif at 341 to 345 is the DDXXD motif element; sequence DDMYD. Residues Asp486, Thr490, and Glu494 each coordinate Mg(2+).

Belongs to the terpene synthase family. Tpsb subfamily. As to quaternary structure, monomer. Requires Mg(2+) as cofactor.

The protein resides in the plastid. Its subcellular location is the chloroplast. The catalysed reaction is (2E)-geranyl diphosphate = beta-thujene + diphosphate. The enzyme catalyses (2E)-geranyl diphosphate = sabinene + diphosphate. It carries out the reaction (2E)-geranyl diphosphate = beta-pinene + diphosphate. It catalyses the reaction (2E)-geranyl diphosphate = alpha-terpinene + diphosphate. The protein operates within secondary metabolite biosynthesis; terpenoid biosynthesis. In terms of biological role, monoterpene synthase involved in the biosynthesis of volatile organic compounds. Mediates the conversion of (2E)-geranyl diphosphate (GPP) into beta-thujene, sabinene, beta-pinene and alpha-terpinene. Does not use (2E,6E)-farnesyl diphosphate (FPP) as substrate. The polypeptide is Monoterepene synthase TPS1, chloropastic (Cananga odorata (Ylang-ylang tree)).